The primary structure comprises 144 residues: Large ribosomal subunit protein uL16 (144 aa).

This sequence belongs to the universal ribosomal protein uL16 family. Part of the 50S ribosomal subunit.

Binds 23S rRNA and is also seen to make contacts with the A and possibly P site tRNAs. This is Large ribosomal subunit protein uL16 from Halalkalibacterium halodurans (strain ATCC BAA-125 / DSM 18197 / FERM 7344 / JCM 9153 / C-125) (Bacillus halodurans).